The following is a 429-amino-acid chain: Adenylosuccinate synthetase (429 aa).

GTP-binding positions include 12–18 and 40–42; these read GDEGKGK and GHT. D13 serves as the catalytic Proton acceptor. Positions 13 and 40 each coordinate Mg(2+). Residues 13–16, 38–41, T128, R142, Q223, T238, and R302 each bind IMP; these read DEGK and NAGH. H41 acts as the Proton donor in catalysis. Residue 298–304 coordinates substrate; it reads ATTGRKR. GTP contacts are provided by residues R304, 330 to 332, and 412 to 414; these read KLD and GTG.

It belongs to the adenylosuccinate synthetase family. As to quaternary structure, homodimer. Requires Mg(2+) as cofactor.

It localises to the cytoplasm. It catalyses the reaction IMP + L-aspartate + GTP = N(6)-(1,2-dicarboxyethyl)-AMP + GDP + phosphate + 2 H(+). It functions in the pathway purine metabolism; AMP biosynthesis via de novo pathway; AMP from IMP: step 1/2. Plays an important role in the de novo pathway of purine nucleotide biosynthesis. Catalyzes the first committed step in the biosynthesis of AMP from IMP. This is Adenylosuccinate synthetase from Tropheryma whipplei (strain TW08/27) (Whipple's bacillus).